Reading from the N-terminus, the 263-residue chain is Endonuclease 8 (263 aa).

Pro-2 (schiff-base intermediate with DNA) is an active-site residue. Catalysis depends on Glu-3, which acts as the Proton donor. Lys-53 functions as the Proton donor; for beta-elimination activity in the catalytic mechanism. 3 residues coordinate DNA: Gln-70, Arg-125, and Asn-169. An FPG-type zinc finger spans residues 229–263; the sequence is KVFHRDGELCERCGGIIEKTTLSSRPFYWCPGCQH. Catalysis depends on Arg-253, which acts as the Proton donor; for delta-elimination activity.

This sequence belongs to the FPG family. It depends on Zn(2+) as a cofactor.

It catalyses the reaction 2'-deoxyribonucleotide-(2'-deoxyribose 5'-phosphate)-2'-deoxyribonucleotide-DNA = a 3'-end 2'-deoxyribonucleotide-(2,3-dehydro-2,3-deoxyribose 5'-phosphate)-DNA + a 5'-end 5'-phospho-2'-deoxyribonucleoside-DNA + H(+). Functionally, involved in base excision repair of DNA damaged by oxidation or by mutagenic agents. Acts as a DNA glycosylase that recognizes and removes damaged bases. Has a preference for oxidized pyrimidines, such as thymine glycol, 5,6-dihydrouracil and 5,6-dihydrothymine. Has AP (apurinic/apyrimidinic) lyase activity and introduces nicks in the DNA strand. Cleaves the DNA backbone by beta-delta elimination to generate a single-strand break at the site of the removed base with both 3'- and 5'-phosphates. The sequence is that of Endonuclease 8 from Escherichia coli (strain SE11).